The chain runs to 486 residues: Protein nucleotidyltransferase YdiU (486 aa).

Residues glycine 90, glycine 92, arginine 93, lysine 113, aspartate 125, glycine 126, arginine 176, and arginine 183 each contribute to the ATP site. Aspartate 252 serves as the catalytic Proton acceptor. Mg(2+) is bound by residues asparagine 253 and aspartate 262. Residue aspartate 262 coordinates ATP.

Belongs to the SELO family. Mg(2+) serves as cofactor. Requires Mn(2+) as cofactor.

It carries out the reaction L-seryl-[protein] + ATP = 3-O-(5'-adenylyl)-L-seryl-[protein] + diphosphate. The catalysed reaction is L-threonyl-[protein] + ATP = 3-O-(5'-adenylyl)-L-threonyl-[protein] + diphosphate. It catalyses the reaction L-tyrosyl-[protein] + ATP = O-(5'-adenylyl)-L-tyrosyl-[protein] + diphosphate. The enzyme catalyses L-histidyl-[protein] + UTP = N(tele)-(5'-uridylyl)-L-histidyl-[protein] + diphosphate. It carries out the reaction L-seryl-[protein] + UTP = O-(5'-uridylyl)-L-seryl-[protein] + diphosphate. The catalysed reaction is L-tyrosyl-[protein] + UTP = O-(5'-uridylyl)-L-tyrosyl-[protein] + diphosphate. Functionally, nucleotidyltransferase involved in the post-translational modification of proteins. It can catalyze the addition of adenosine monophosphate (AMP) or uridine monophosphate (UMP) to a protein, resulting in modifications known as AMPylation and UMPylation. The polypeptide is Protein nucleotidyltransferase YdiU (Pseudomonas aeruginosa (strain UCBPP-PA14)).